Reading from the N-terminus, the 1571-residue chain is Paternally-expressed gene 3 protein (1571 aa).

Disordered regions lie at residues 1 to 120 (MYHH…NPIQ) and 137 to 241 (AEDD…QERG). 5 stretches are compositionally biased toward basic and acidic residues: residues 35–56 (GSER…DRWP), 80–99 (FGLD…RSQD), 169–186 (PEAK…DESS), 193–215 (KFIK…ERPP), and 223–241 (DNWK…QERG). The 10 X 5 AA repeat of P-H-X-X-E stretch occupies residues 199-265 (ARNPKSGRAR…DLASRSRALE (67 aa)). Residues 199-265 (ARNPKSGRAR…DLASRSRALE (67 aa)) form a 3 X 5 AA repeat of P-H-D-D-K region. C2H2-type zinc fingers lie at residues 325–347 (YVCD…QIMH), 378–400 (FECK…RQIH), 436–458 (YECK…QKIH), and 520–542 (YECK…QKIH). The segment at 456–495 (KIHGRGNSDDRDNERERERDRLRARAREQRERERERERER) is disordered. Disordered stretches follow at residues 585–649 (ALMG…LKFP), 672–713 (EAQK…TYEG), and 764–820 (REDA…AKKK). Positions 592-614 (SSEHQKNRSRRNFFEGRGFEKPF) are enriched in basic and acidic residues. Composition is skewed to polar residues over residues 770–781 (GSSSSNYHTPNV) and 799–808 (DVTFSVPSSS). A compositionally biased stretch (basic and acidic residues) spans 809 to 820 (VREHQKARAKKK). A C2H2-type 5 zinc finger spans residues 850–872 (FECQECGEAFARRSELIEHQKIH). The tract at residues 937 to 1070 (FNAEEPHDKE…ESHGQEKVED (134 aa)) is disordered. Residues 940 to 1070 (EEPHDKETHG…ESHGQEKVED (131 aa)) show a composition bias toward basic and acidic residues. 13 tandem repeats follow at residues 942–946 (PHDKE), 967–971 (PHGDE), 987–991 (PHDDK), 992–996 (PHGQE), 997–1001 (PHDDK), 1002–1006 (PHGQE), 1007–1011 (PHDDK), 1012–1016 (PHGQE), 1017–1021 (PHGDE), 1022–1026 (PHGQE), 1027–1031 (PHGDE), 1032–1036 (PHDKE), and 1047–1051 (PHSEE). 4 C2H2-type zinc fingers span residues 1091–1113 (YECQ…QDTH), 1147–1169 (YECP…QRVH), 1209–1231 (IRCR…MRQH), and 1266–1289 (FECT…TKVH). A C2H2-type 10; degenerate zinc finger spans residues 1317–1339 (YECKDCGQSFLDDTVIAERMVFH). Residues 1373–1487 (NAEAAEPEVE…DQEIEVEEPY (115 aa)) are disordered. 3 stretches are compositionally biased toward acidic residues: residues 1377–1397 (AEPE…EVEA), 1405–1418 (EGPD…DGEA), and 1431–1485 (DADE…EVEE). 2 consecutive C2H2-type zinc fingers follow at residues 1488–1510 (YNCH…LKSH) and 1547–1569 (FKCD…QNSH).

Belongs to the krueppel C2H2-type zinc-finger protein family. Homodimer. Interacts with SIAH1A and SIAH2. Interacts with TRAF2. In terms of tissue distribution, brain, glial cells, neurons, skeletal muscle, uterus and placenta. In the placenta it is found in all trophoblast cells.

The protein resides in the nucleus. Its subcellular location is the cytoplasm. Its function is as follows. Induces apoptosis in cooperation with SIAH1A. Acts as a mediator between p53/TP53 and BAX in a neuronal death pathway that is activated by DNA damage. Acts synergistically with TRAF2 and inhibits TNF induced apoptosis through activation of NF-kappa-B. Plays a role in regulating maternal behavior and offspring growth. The sequence is that of Paternally-expressed gene 3 protein (Peg3) from Mus musculus (Mouse).